The primary structure comprises 82 residues: Small ribosomal subunit protein uS17 (82 aa).

Belongs to the universal ribosomal protein uS17 family. In terms of assembly, part of the 30S ribosomal subunit.

One of the primary rRNA binding proteins, it binds specifically to the 5'-end of 16S ribosomal RNA. The protein is Small ribosomal subunit protein uS17 of Shewanella piezotolerans (strain WP3 / JCM 13877).